The following is a 608-amino-acid chain: 2',5'-phosphodiesterase 12 (608 aa).

A mitochondrion-targeting transit peptide spans 1 to 16; that stretch reads MWRLPGRSALRGVRSV. The segment covering 90–99 has biased composition (basic residues); it reads AAKKSRKNRA. The tract at residues 90–111 is disordered; it reads AAKKSRKNRAHSSGGAACEATG. Position 216 is a phosphoserine (Ser216). The Mg(2+) site is built by Glu350, Asp495, and Asn497. The Proton donor/acceptor role is filled by Asp495.

The protein belongs to the CCR4/nocturin family. Mg(2+) is required as a cofactor.

It localises to the mitochondrion matrix. It catalyses the reaction Exonucleolytic cleavage of poly(A) to 5'-AMP.. In terms of biological role, enzyme that cleaves 2',5'-phosphodiester bond linking adenosines of the 5'-triphosphorylated oligoadenylates, triphosphorylated oligoadenylates referred as 2-5A modulates the 2-5A system. Degrades triphosphorylated 2-5A to produce AMP and ATP. Also cleaves 3',5'-phosphodiester bond of oligoadenylates. Plays a role as a negative regulator of the 2-5A system that is one of the major pathways for antiviral and antitumor functions induced by interferons (IFNs). Suppression of this enzyme increases cellular 2-5A levels and decreases viral replication in cultured small-airway epithelial cells. The sequence is that of 2',5'-phosphodiesterase 12 (Pde12) from Mus musculus (Mouse).